The chain runs to 123 residues: Ribosome-binding factor A (123 aa).

Belongs to the RbfA family. As to quaternary structure, monomer. Binds 30S ribosomal subunits, but not 50S ribosomal subunits or 70S ribosomes.

It is found in the cytoplasm. Its function is as follows. One of several proteins that assist in the late maturation steps of the functional core of the 30S ribosomal subunit. Associates with free 30S ribosomal subunits (but not with 30S subunits that are part of 70S ribosomes or polysomes). Required for efficient processing of 16S rRNA. May interact with the 5'-terminal helix region of 16S rRNA. The polypeptide is Ribosome-binding factor A (Chlamydia trachomatis serovar A (strain ATCC VR-571B / DSM 19440 / HAR-13)).